Consider the following 212-residue polypeptide: Small ribosomal subunit protein uS5 (212 aa).

In terms of domain architecture, S5 DRBM spans 48 to 111 (LEDEVLDINM…DIAKLNIIDV (64 aa)).

The protein belongs to the universal ribosomal protein uS5 family. In terms of assembly, part of the 30S ribosomal subunit. Contacts protein S4.

With S4 and S12 plays an important role in translational accuracy. This chain is Small ribosomal subunit protein uS5, found in Haloarcula marismortui (strain ATCC 43049 / DSM 3752 / JCM 8966 / VKM B-1809) (Halobacterium marismortui).